The primary structure comprises 434 residues: Protein trichome birefringence-like 3 (434 aa).

Residues I15 to T35 traverse the membrane as a helical; Signal-anchor for type II membrane protein segment. Residues G166–S168 carry the GDS motif motif. Positions D413–N427 match the DCXHWCLPGXXDXWN motif motif.

This sequence belongs to the PC-esterase family. TBL subfamily.

It is found in the golgi apparatus membrane. In terms of biological role, involved in secondary cell wall cellulose deposition. Required for normal stem development. May act as a bridging protein that binds pectin and other cell wall polysaccharides. Probably involved in maintaining esterification of pectins. May be involved in the specific O-acetylation of cell wall polymers. The sequence is that of Protein trichome birefringence-like 3 (TBL3) from Arabidopsis thaliana (Mouse-ear cress).